The following is a 151-amino-acid chain: Deoxyuridine 5'-triphosphate nucleotidohydrolase (151 aa).

Substrate-binding positions include 70 to 72 (RSG), Asn-83, 87 to 89 (LID), and Met-97.

This sequence belongs to the dUTPase family. As to quaternary structure, homotrimer. Mg(2+) is required as a cofactor.

The catalysed reaction is dUTP + H2O = dUMP + diphosphate + H(+). Its pathway is pyrimidine metabolism; dUMP biosynthesis; dUMP from dCTP (dUTP route): step 2/2. In terms of biological role, this enzyme is involved in nucleotide metabolism: it produces dUMP, the immediate precursor of thymidine nucleotides and it decreases the intracellular concentration of dUTP so that uracil cannot be incorporated into DNA. In Escherichia coli (strain K12 / MC4100 / BW2952), this protein is Deoxyuridine 5'-triphosphate nucleotidohydrolase.